The primary structure comprises 205 residues: Probable GTP-binding protein EngB (205 aa).

Residues 21–196 (QVPEVAFAGR…VHEVSKCVKE (176 aa)) form the EngB-type G domain. GTP-binding positions include 29–36 (GRSNVGKS), 56–60 (GSTRQ), 74–77 (DLPG), 141–144 (TKID), and 172–177 (IIGTSS). Residues Ser36 and Thr58 each contribute to the Mg(2+) site.

It belongs to the TRAFAC class TrmE-Era-EngA-EngB-Septin-like GTPase superfamily. EngB GTPase family. Mg(2+) is required as a cofactor.

Its function is as follows. Necessary for normal cell division and for the maintenance of normal septation. This Anaplasma marginale (strain Florida) protein is Probable GTP-binding protein EngB.